Consider the following 264-residue polypeptide: Electron transfer flavoprotein subunit beta (264 aa).

AMP is bound by residues alanine 6, 36–39 (NEWD), valine 64, 119–122 (GVQS), and 127–130 (YAST).

As to quaternary structure, heterodimer of an alpha and a beta subunit. Forms a ternary complex with trimethylamine dehydrogenase.

In terms of biological role, heterodimeric electron transfer flavoprotein that accepts electrons from trimethylamine dehydrogenase. It transfers the electrons to the main respiratory chain via ETF-ubiquinone oxidoreductase (ETF dehydrogenase). EtfB binds an AMP molecule that probably has a purely structural role. The polypeptide is Electron transfer flavoprotein subunit beta (etfB) (Methylophilus methylotrophus (Bacterium W3A1)).